A 502-amino-acid chain; its full sequence is ATP synthase subunit alpha (502 aa).

169–176 (GDRQTGKT) contacts ATP.

This sequence belongs to the ATPase alpha/beta chains family. F-type ATPases have 2 components, CF(1) - the catalytic core - and CF(0) - the membrane proton channel. CF(1) has five subunits: alpha(3), beta(3), gamma(1), delta(1), epsilon(1). CF(0) has three main subunits: a(1), b(2) and c(9-12). The alpha and beta chains form an alternating ring which encloses part of the gamma chain. CF(1) is attached to CF(0) by a central stalk formed by the gamma and epsilon chains, while a peripheral stalk is formed by the delta and b chains.

It localises to the cell membrane. It carries out the reaction ATP + H2O + 4 H(+)(in) = ADP + phosphate + 5 H(+)(out). Produces ATP from ADP in the presence of a proton gradient across the membrane. The alpha chain is a regulatory subunit. This Priestia megaterium (strain ATCC 12872 / QMB1551) (Bacillus megaterium) protein is ATP synthase subunit alpha.